The primary structure comprises 60 residues: Large ribosomal subunit protein uL30 (60 aa).

It belongs to the universal ribosomal protein uL30 family. As to quaternary structure, part of the 50S ribosomal subunit.

This chain is Large ribosomal subunit protein uL30, found in Paracidovorax citrulli (strain AAC00-1) (Acidovorax citrulli).